A 526-amino-acid chain; its full sequence is Chaperonin GroEL, chloroplastic (526 aa).

ATP is bound by residues 29 to 32 (TLGP), 86 to 90 (DGTTT), Gly-412, 476 to 478 (DAA), and Asp-492.

Belongs to the chaperonin (HSP60) family. As to quaternary structure, forms a cylinder of 14 subunits composed of two heptameric rings stacked back-to-back. Interacts with the co-chaperonin GroES.

Its subcellular location is the plastid. It is found in the chloroplast. The enzyme catalyses ATP + H2O + a folded polypeptide = ADP + phosphate + an unfolded polypeptide.. In terms of biological role, together with its co-chaperonin GroES, plays an essential role in assisting protein folding. The GroEL-GroES system forms a nano-cage that allows encapsulation of the non-native substrate proteins and provides a physical environment optimized to promote and accelerate protein folding. The sequence is that of Chaperonin GroEL, chloroplastic from Cyanidioschyzon merolae (strain NIES-3377 / 10D) (Unicellular red alga).